A 342-amino-acid polypeptide reads, in one-letter code: Mitochondrial fission factor (342 aa).

Topologically, residues 1–322 (MSKGTSSDTS…ENKERAKREM (322 aa)) are cytoplasmic. Residue Thr115 is modified to Phosphothreonine. Position 146 is a phosphoserine (Ala146). Residue Arg149 is modified to Phosphothreonine. Lys151, Ser155, Ser157, and Ser172 each carry phosphoserine. The residue at position 200 (Thr200) is a Phosphothreonine. Residues Ser202, Ser229, Ser233, and Ser295 each carry the phosphoserine modification. A coiled-coil region spans residues 291–322 (VDAASLRRQIIKLNRRLQLLEEENKERAKREM). The chain crosses the membrane as a helical; Anchor for type IV membrane protein span at residues 323–340 (VMYSITVAFWLLNSWLWF). The Mitochondrial intermembrane segment spans residues 341 to 342 (RR).

Belongs to the Tango11 family. As to quaternary structure, homodimer. Interacts with DNM1L. Interacts with C11orf65/MFI; the interaction inhibits MFF interaction with DNM1L. Highly expressed in heart, kidney, liver, brain, muscle, and stomach.

The protein resides in the mitochondrion outer membrane. It localises to the peroxisome. It is found in the cytoplasmic vesicle. Its subcellular location is the secretory vesicle. The protein localises to the synaptic vesicle. Functionally, plays a role in mitochondrial and peroxisomal fission. Promotes the recruitment and association of the fission mediator dynamin-related protein 1 (DNM1L) to the mitochondrial surface. May be involved in regulation of synaptic vesicle membrane dynamics by recruitment of DNM1L to clathrin-containing vesicles. The sequence is that of Mitochondrial fission factor (MFF) from Homo sapiens (Human).